Here is a 134-residue protein sequence, read N- to C-terminus: S-protein homolog 18 (134 aa).

Positions 1–25 (MCPSSFRLILSVILIAFLFVGLCEA) are cleaved as a signal peptide. The N-linked (GlcNAc...) asparagine glycan is linked to asparagine 87.

The protein belongs to the plant self-incompatibility (S1) protein family.

It is found in the secreted. The chain is S-protein homolog 18 from Arabidopsis thaliana (Mouse-ear cress).